Consider the following 272-residue polypeptide: Merozoite surface protein 2 (272 aa).

The first 20 residues, 1 to 20, serve as a signal peptide directing secretion; sequence MKVIKTLSIINFFIFVTFNI. 2 N-linked (GlcNAc...) asparagine glycosylation sites follow: Asn22 and Asn36. Positions 44-198 are polymorphic region; it reads AESKPSTGAG…EQTESPELQS (155 aa). The segment at 45 to 233 is disordered; the sequence is ESKPSTGAGG…DSQKECTDGN (189 aa). The segment covering 51–82 has biased composition (gly residues); it reads GAGGSAGGSAGGSAGGSAGGSAGGSAGSGDGN. 6 repeat units span residues 53–56, 57–60, 61–64, 65–68, 69–72, and 73–76. Residues 53–76 are 6 X 4 AA tandem repeats of G-G-S-A; that stretch reads GGSAGGSAGGSAGGSAGGSAGGSA. Positions 83–119 are enriched in low complexity; sequence GADAEGSSSTPATTTTTKTTTTTTTTNDAEASTSTSS. Basic and acidic residues predominate over residues 122 to 137; that stretch reads PNHKNAETNPKGKGEV. Composition is skewed to polar residues over residues 139–165 and 172–200; these read EPNQANKETQNNSNVQQDSQTKSNVPP and KSPTAQPEQAENSAPTAEQTESPELQSAP. Asn149 is a glycosylation site (N-linked (GlcNAc...) asparagine). Residue Asn221 is glycosylated (N-linked (GlcNAc...) asparagine). Cys229 and Cys237 are oxidised to a cystine. Residues Asn245 and Asn246 are each glycosylated (N-linked (GlcNAc...) asparagine). Residue Asn246 is the site of GPI-anchor amidated asparagine attachment. A propeptide spans 247–272 (removed in mature form); the sequence is SSNIASINKFVVLISATLVLSFAIFI.

The protein resides in the cell membrane. May play a role in the merozoite attachment to the erythrocyte. The protein is Merozoite surface protein 2 of Plasmodium falciparum (isolate 3D7).